A 189-amino-acid chain; its full sequence is Elongation factor P (189 aa).

Belongs to the elongation factor P family.

The protein resides in the cytoplasm. Its pathway is protein biosynthesis; polypeptide chain elongation. Its function is as follows. Involved in peptide bond synthesis. Stimulates efficient translation and peptide-bond synthesis on native or reconstituted 70S ribosomes in vitro. Probably functions indirectly by altering the affinity of the ribosome for aminoacyl-tRNA, thus increasing their reactivity as acceptors for peptidyl transferase. The protein is Elongation factor P of Chloroflexus aurantiacus (strain ATCC 29364 / DSM 637 / Y-400-fl).